The following is a 451-amino-acid chain: Tubulin gamma-2 chain (451 aa).

Residue Ser-131 is modified to Phosphoserine; by BRSK1. Ala-142–Gly-148 is a GTP binding site.

Belongs to the tubulin family. Component of the gamma-tubulin ring complex (gTuRC) consisting of TUBGCP2, TUBGCP3, TUBGCP4, TUBGCP5 and TUBGCP6 and gamma-tubulin TUBG1 or TUBG2. TUBGCP2, TUBGCP3, TUBGCP4, TUBGCP5 and TUBGCP6 assemble in a 5:5:2:1:1 stoichiometry; each is associated with a gamma-tubulin, thereby arranging 14 gamma-tubulins in a helical manner. Gamma-tubulin at the first position is blocked by TUBGCP3 at the last position, allowing 13 protafilaments to grow into a microtubule. Interacts with alpha-beta tubulin heterodimers; the interaction allows microtubules to nucleate from the gTuRC. Phosphorylation at Ser-131 by BRSK1 regulates centrosome duplication, possibly by mediating relocation of gamma-tubulin and its associated proteins from the cytoplasm to the centrosome.

Its subcellular location is the cytoplasm. It is found in the cytoskeleton. The protein localises to the microtubule organizing center. The protein resides in the centrosome. In terms of biological role, tubulin is the major constituent of microtubules, protein filaments consisting of alpha- and beta-tubulin heterodimers. Gamma-tubulin is a key component of the gamma-tubulin ring complex (gTuRC) which mediates microtubule nucleation. The gTuRC regulates the minus-end nucleation of alpha-beta tubulin heterodimers that grow into microtubule protafilaments, a critical step in centrosome duplication and spindle formation. This Mus musculus (Mouse) protein is Tubulin gamma-2 chain (Tubg2).